The sequence spans 574 residues: Septation ring formation regulator EzrA (574 aa).

The Extracellular segment spans residues 1–7; the sequence is MSSGIIL. The chain crosses the membrane as a helical span at residues 8 to 26; it reads LIVAIVLLVIIAYLVGVII. Topologically, residues 27-574 are cytoplasmic; that stretch reads RKRNDSLITS…YEKTREHIRF (548 aa). Coiled-coil stretches lie at residues 102–141, 274–350, and 459–520; these read NFIR…EEKN, ELVT…ETES, and QLEA…SFEA.

The protein belongs to the EzrA family.

The protein localises to the cell membrane. Negative regulator of FtsZ ring formation; modulates the frequency and position of FtsZ ring formation. Inhibits FtsZ ring formation at polar sites. Interacts either with FtsZ or with one of its binding partners to promote depolymerization. The protein is Septation ring formation regulator EzrA of Streptococcus pyogenes serotype M4 (strain MGAS10750).